Here is a 117-residue protein sequence, read N- to C-terminus: Large ribosomal subunit protein uL18 (117 aa).

Belongs to the universal ribosomal protein uL18 family. As to quaternary structure, part of the 50S ribosomal subunit; part of the 5S rRNA/L5/L18/L25 subcomplex. Contacts the 5S and 23S rRNAs.

Functionally, this is one of the proteins that bind and probably mediate the attachment of the 5S RNA into the large ribosomal subunit, where it forms part of the central protuberance. This chain is Large ribosomal subunit protein uL18, found in Methylococcus capsulatus (strain ATCC 33009 / NCIMB 11132 / Bath).